A 236-amino-acid chain; its full sequence is uncharacterized protein (236 aa).

This is an uncharacterized protein from Schizosaccharomyces pombe (strain 972 / ATCC 24843) (Fission yeast).